Consider the following 457-residue polypeptide: Argininosuccinate lyase (457 aa).

Belongs to the lyase 1 family. Argininosuccinate lyase subfamily.

Its subcellular location is the cytoplasm. It carries out the reaction 2-(N(omega)-L-arginino)succinate = fumarate + L-arginine. Its pathway is amino-acid biosynthesis; L-arginine biosynthesis; L-arginine from L-ornithine and carbamoyl phosphate: step 3/3. The protein is Argininosuccinate lyase of Shewanella sediminis (strain HAW-EB3).